A 236-amino-acid polypeptide reads, in one-letter code: Adenosine 5'-phosphosulfate reductase (236 aa).

[4Fe-4S] cluster-binding residues include Cys123, Cys124, Cys206, and Cys209. Cys232 serves as the catalytic Nucleophile; cysteine thiosulfonate intermediate.

Belongs to the PAPS reductase family. CysH subfamily. The cofactor is [4Fe-4S] cluster.

The protein localises to the cytoplasm. The enzyme catalyses [thioredoxin]-disulfide + sulfite + AMP + 2 H(+) = adenosine 5'-phosphosulfate + [thioredoxin]-dithiol. Its pathway is sulfur metabolism; hydrogen sulfide biosynthesis; sulfite from sulfate. Its function is as follows. Catalyzes the formation of sulfite from adenosine 5'-phosphosulfate (APS) using thioredoxin as an electron donor. The protein is Adenosine 5'-phosphosulfate reductase of Streptomyces coelicolor (strain ATCC BAA-471 / A3(2) / M145).